The chain runs to 160 residues: Putative 4-hydroxy-4-methyl-2-oxoglutarate aldolase (160 aa).

Residues 78–81 (GDVI) and R100 contribute to the substrate site. D101 serves as a coordination point for a divalent metal cation.

Belongs to the class II aldolase/RraA-like family. In terms of assembly, homotrimer. Requires a divalent metal cation as cofactor.

The catalysed reaction is 4-hydroxy-4-methyl-2-oxoglutarate = 2 pyruvate. It catalyses the reaction oxaloacetate + H(+) = pyruvate + CO2. Functionally, catalyzes the aldol cleavage of 4-hydroxy-4-methyl-2-oxoglutarate (HMG) into 2 molecules of pyruvate. Also contains a secondary oxaloacetate (OAA) decarboxylase activity due to the common pyruvate enolate transition state formed following C-C bond cleavage in the retro-aldol and decarboxylation reactions. In Mycolicibacterium vanbaalenii (strain DSM 7251 / JCM 13017 / BCRC 16820 / KCTC 9966 / NRRL B-24157 / PYR-1) (Mycobacterium vanbaalenii), this protein is Putative 4-hydroxy-4-methyl-2-oxoglutarate aldolase.